Here is a 398-residue protein sequence, read N- to C-terminus: Ethanolaminephosphotransferase 1 (398 aa).

N-acetylalanine is present on Ala2. Helical transmembrane passes span 47-69, 84-103, 123-145, 150-172, 179-201, 221-243, 256-278, 291-310, 319-341, and 345-367; these read WLAP…LLLT, HVPD…AYTL, LFDH…SIFG, GVSV…LSHW, VLFL…IVTA, LFTA…LNFF, VYEA…VWIL, IFYF…LIVC, TLNW…AATS, and SALL…VQVV. Position 388 (Sec388) is a non-standard amino acid, selenocysteine.

This sequence belongs to the CDP-alcohol phosphatidyltransferase class-I family. Requires Mg(2+) as cofactor. It depends on Mn(2+) as a cofactor.

Its subcellular location is the endoplasmic reticulum membrane. It carries out the reaction CDP-ethanolamine + a 1,2-diacyl-sn-glycerol = a 1,2-diacyl-sn-glycero-3-phosphoethanolamine + CMP + H(+). The catalysed reaction is 1-O-alkyl-2-acyl-sn-glycerol + CDP-ethanolamine = a 1-O-alkyl-2-acyl-sn-glycero-3-phosphoethanolamine + CMP + H(+). Its pathway is phospholipid metabolism; phosphatidylethanolamine biosynthesis; phosphatidylethanolamine from ethanolamine: step 3/3. In terms of biological role, ethanolaminephosphotransferase that catalyzes the transfer of phosphoethanolamine (PE) from CDP-ethanolamine to lipid acceptors, the final step in the synthesis of PE via the 'Kennedy' pathway. PE is the second most abundant phospholipid of membranes in mammals and is involved in various membrane-related cellular processes. The enzyme is critical for the synthesis of several PE species and also catalyzes the synthesis of plasmanyl-PE, a lipid required for proper myelination and neurodevelopment, from 1-alkyl-2-acylglycerol. This Mus musculus (Mouse) protein is Ethanolaminephosphotransferase 1.